We begin with the raw amino-acid sequence, 366 residues long: MHNTFTHTKNNTHTKNNTQAKNSGSQTKSNAVSLNKPRKLTEADVTPESIFYQRRKVLQALGITAATLALPASAQADLLAWFKGNEPPKAPSGKPLTFTPSAAYHPDLALTPEDKVTGYNNFYEFGLDKADPAANAGTLKTEDWQIKIDGDVVKPMTLDMDYLMKCFPLEERIYRLRCVEAWSMVVPWIGFELGKLLKLAEPTSNARYVAFQTLYAPDQMPGQKNRFIGGGLDYPYVEGLRLDEAMHPLAFMVVGVYGKTLPPQNGAPLRLMTPWKYGFKSIKSIVHIRLTRDQPPTTWNLSAPNEYGFYANVNPHVDHPRWSQATERVIGSGGILDVKRQPTLLFNGYAEQVASLYRGLDLRKNF.

A compositionally biased stretch (low complexity) spans 1–22 (MHNTFTHTKNNTHTKNNTQAKN). The disordered stretch occupies residues 1–40 (MHNTFTHTKNNTHTKNNTQAKNSGSQTKSNAVSLNKPRKL). Positions 1-76 (MHNTFTHTKN…TLALPASAQA (76 aa)) form a signal peptide, tat-type signal. Residues 23 to 33 (SGSQTKSNAVS) are compositionally biased toward polar residues. Mo-molybdopterin-binding positions include Asn120, 123 to 124 (YE), Cys178, Thr213, Asn265, Arg270, and 281 to 283 (SIK).

Belongs to the MsrP family. As to quaternary structure, heterodimer of a catalytic subunit (MsrP) and a heme-binding subunit (MsrQ). Mo-molybdopterin serves as cofactor. Predicted to be exported by the Tat system. The position of the signal peptide cleavage has not been experimentally proven.

It localises to the periplasm. The catalysed reaction is L-methionyl-[protein] + a quinone + H2O = L-methionyl-(S)-S-oxide-[protein] + a quinol. The enzyme catalyses L-methionyl-[protein] + a quinone + H2O = L-methionyl-(R)-S-oxide-[protein] + a quinol. Functionally, part of the MsrPQ system that repairs oxidized periplasmic proteins containing methionine sulfoxide residues (Met-O), using respiratory chain electrons. Thus protects these proteins from oxidative-stress damage caused by reactive species of oxygen and chlorine generated by the host defense mechanisms. MsrPQ is essential for the maintenance of envelope integrity under bleach stress, rescuing a wide series of structurally unrelated periplasmic proteins from methionine oxidation. The catalytic subunit MsrP is non-stereospecific, being able to reduce both (R-) and (S-) diastereoisomers of methionine sulfoxide. This Yersinia pestis protein is Protein-methionine-sulfoxide reductase catalytic subunit MsrP.